Reading from the N-terminus, the 181-residue chain is MRIDKNLPNYLTIARIMVIPVIILAFYINNSLARKLGALLFVLASITDFFDGYIARKYNLVTSFGKMFDPIADKLLIGCVIIMLLKKDNVDEIPCLLILAREFLVSGLREFLALVKVSVPVSRLAKVKTFLQMFALSILILGSKGSGIIYLDIVGEIILWIAAFLTIITGYSYFKACKKYF.

Helical transmembrane passes span 8–28 (PNYL…AFYI), 35–55 (KLGA…GYIA), 64–84 (FGKM…IIML), and 148–168 (IIYL…LTII).

This sequence belongs to the CDP-alcohol phosphatidyltransferase class-I family.

It localises to the cell membrane. The catalysed reaction is a CDP-1,2-diacyl-sn-glycerol + sn-glycerol 3-phosphate = a 1,2-diacyl-sn-glycero-3-phospho-(1'-sn-glycero-3'-phosphate) + CMP + H(+). It participates in phospholipid metabolism; phosphatidylglycerol biosynthesis; phosphatidylglycerol from CDP-diacylglycerol: step 1/2. In terms of biological role, this protein catalyzes the committed step to the synthesis of the acidic phospholipids. The chain is CDP-diacylglycerol--glycerol-3-phosphate 3-phosphatidyltransferase (pgsA) from Rickettsia felis (strain ATCC VR-1525 / URRWXCal2) (Rickettsia azadi).